Here is a 462-residue protein sequence, read N- to C-terminus: 3-oxoacyl-[acyl-carrier-protein] synthase I, chloroplastic (462 aa).

A chloroplast-targeting transit peptide spans 1-35; the sequence is MHAHAAHALGLRVPPPAFPRRRARPRRRPAAAVLA. The segment at 1-45 is disordered; that stretch reads MHAHAAHALGLRVPPPAFPRRRARPRRRPAAAVLATSAAPQRETD. Positions 19–29 are enriched in basic residues; that stretch reads PRRRARPRRRP. Low complexity predominate over residues 30 to 39; it reads AAAVLATSAA. The region spanning 47-459 is the Ketosynthase family 3 (KS3) domain; it reads RKRVVITGMG…GHNSVVVFAP (413 aa). Active-site for beta-ketoacyl synthase activity residues include C213, H353, and H389.

It belongs to the thiolase-like superfamily. Beta-ketoacyl-ACP synthases family. As to quaternary structure, homodimer.

The protein localises to the plastid. It localises to the chloroplast. The catalysed reaction is a fatty acyl-[ACP] + malonyl-[ACP] + H(+) = a 3-oxoacyl-[ACP] + holo-[ACP] + CO2. Its function is as follows. Catalyzes the condensation reaction of fatty acid synthesis by the addition to an acyl acceptor of two carbons from malonyl-ACP. Specific for elongation from C-10 to unsaturated C-16 and C-18 fatty acids. The sequence is that of 3-oxoacyl-[acyl-carrier-protein] synthase I, chloroplastic (KAS12) from Hordeum vulgare (Barley).